A 336-amino-acid polypeptide reads, in one-letter code: Atypical chemokine receptor 1 (336 aa).

Residues 1–63 are Extracellular-facing; the sequence is MGNCLHQAEL…CNLLDDSSLP (63 aa). Residues N16 and N33 are each glycosylated (N-linked (GlcNAc...) asparagine). 2 cysteine pairs are disulfide-bonded: C51-C276 and C129-C195. Residues 64–84 form a helical membrane-spanning segment; sequence FFILASVLGILASSTVLFMLF. The Cytoplasmic segment spans residues 85-95; it reads RPLFRWQLCPG. The chain crosses the membrane as a helical span at residues 96–116; sequence WPVLAQLAVGSALFSIVVPIL. Over 117–129 the chain is Extracellular; the sequence is APGLGNTRSSALC. The helical transmembrane segment at 130–153 threads the bilayer; sequence SLGYCVWYGSAFAQALLLGCHASL. Residues 154–166 lie on the Cytoplasmic side of the membrane; that stretch reads GPKLGAGQVPGLT. Residues 167 to 187 form a helical membrane-spanning segment; sequence LGLTVGLWGAAALLTVPITLA. The Extracellular segment spans residues 188–207; that stretch reads SGASDGLCTPIYSTELKALQ. Residues 208-228 traverse the membrane as a helical segment; the sequence is ATHTVACFAIFVLLPLGLFGA. Over 229–244 the chain is Cytoplasmic; the sequence is KGVKKALGMGPGPWMT. A helical transmembrane segment spans residues 245 to 265; sequence ILWIWFIFWWPHGVVLGLDFL. The Extracellular portion of the chain corresponds to 266-287; sequence VRSKLLLLPTCLAQQVLDLLLN. A helical transmembrane segment spans residues 288–308; sequence LAEALTIVHCVATPLLLALFC. Residues 309 to 336 lie on the Cytoplasmic side of the membrane; sequence HQATRTLLPSLPLPERWSSPVDTLGSKS.

This sequence belongs to the G-protein coupled receptor 1 family. Atypical chemokine receptor subfamily.

The protein localises to the early endosome. The protein resides in the recycling endosome. It localises to the membrane. Its function is as follows. Atypical chemokine receptor that controls chemokine levels and localization via high-affinity chemokine binding that is uncoupled from classic ligand-driven signal transduction cascades, resulting instead in chemokine sequestration, degradation, or transcytosis. Also known as interceptor (internalizing receptor) or chemokine-scavenging receptor or chemokine decoy receptor. Has a promiscuous chemokine-binding profile, interacting with inflammatory chemokines of both the CXC and the CC subfamilies but not with homeostatic chemokines. Acts as a receptor for chemokines including CCL2, CCL5, CCL7, CCL11, CCL13, CCL14, CCL17, CXCL5, CXCL6, IL8/CXCL8, CXCL11, GRO, RANTES, MCP-1 and TARC. May regulate chemokine bioavailability and, consequently, leukocyte recruitment through two distinct mechanisms: when expressed in endothelial cells, it sustains the abluminal to luminal transcytosis of tissue-derived chemokines and their subsequent presentation to circulating leukocytes; when expressed in erythrocytes, serves as blood reservoir of cognate chemokines but also as a chemokine sink, buffering potential surges in plasma chemokine levels. This Sapajus apella (Brown-capped capuchin) protein is Atypical chemokine receptor 1 (ACKR1).